The chain runs to 650 residues: GATA zinc finger domain-containing protein 11 (650 aa).

The span at 16–79 (LYNNTNTNSN…NSSNSLSSSF (64 aa)) shows a compositional bias: low complexity. Disordered regions lie at residues 16 to 96 (LYNN…SGYN), 111 to 181 (KRSN…TTPL), 221 to 335 (NNSN…NNNK), and 409 to 515 (RIFG…NKRK). The span at 116–129 (LDDNMSVPTLQNFT) shows a compositional bias: polar residues. Composition is skewed to low complexity over residues 130–180 (NNNN…PTTP) and 221–260 (NNSN…NNNN). Residues 261–272 (QSIVPQSIHLQS) show a composition bias toward polar residues. Over residues 273-334 (TTPQIQPLSL…NNSYNTNNNN (62 aa)) the composition is skewed to low complexity. Residues 425–434 (RPRRFRKSKV) show a composition bias toward basic residues. The span at 442 to 511 (HNNNNNNINN…GNGNTNSTNN (70 aa)) shows a compositional bias: low complexity. The segment at 522 to 547 (CTSCGTTSSPEWRKGPAGNQSLCNAC) adopts a GATA-type zinc-finger fold. Residues 619 to 650 (QQQQQQQQQQQNHHHQQLQQQQQQQQQQQLHH) form a disordered region.

Its function is as follows. Transcription factor that regulates morphogenetic cell movement during development. The polypeptide is GATA zinc finger domain-containing protein 11 (gtaK) (Dictyostelium discoideum (Social amoeba)).